A 519-amino-acid polypeptide reads, in one-letter code: Chaperone SurA (519 aa).

Positions 1 to 31 are cleaved as a signal peptide; that stretch reads MMRSLHSLRRMSGTVLALMLAAGLPLSAAQA. 2 stretches are compositionally biased toward low complexity: residues 31 to 45 and 197 to 207; these read AQPA…QKPA and PAAAQATRAPA. Disordered stretches follow at residues 31–50 and 196–221; these read AQPA…PAPS and NPAA…PAQS. The PpiC 1 domain occupies 223–324; that stretch reads PAMLVLAQIL…NGFHILKVVD (102 aa). Residues 328–361 form a disordered region; sequence GGQPAQAARPAPAPAPQQPSSFQEGPSVAAPQGP. Residues 364-463 enclose the PpiC 2 domain; the sequence is VTQTHARHIL…FGWHLIQVLE (100 aa).

It is found in the periplasm. The enzyme catalyses [protein]-peptidylproline (omega=180) = [protein]-peptidylproline (omega=0). In terms of biological role, chaperone involved in the correct folding and assembly of outer membrane proteins. Recognizes specific patterns of aromatic residues and the orientation of their side chains, which are found more frequently in integral outer membrane proteins. May act in both early periplasmic and late outer membrane-associated steps of protein maturation. This Bordetella parapertussis (strain 12822 / ATCC BAA-587 / NCTC 13253) protein is Chaperone SurA.